The primary structure comprises 489 residues: Type II restriction enzyme Sau3AI (489 aa).

Mg(2+) is required as a cofactor.

It catalyses the reaction Endonucleolytic cleavage of DNA to give specific double-stranded fragments with terminal 5'-phosphates.. Its function is as follows. An E and P subtype restriction enzyme that recognizes the double-stranded sequence 5'-GATC-3' and cleaves before G-1. The polypeptide is Type II restriction enzyme Sau3AI (sau3AIR) (Staphylococcus aureus).